The sequence spans 751 residues: Photosystem I P700 chlorophyll a apoprotein A1 (751 aa).

Helical transmembrane passes span 73–96 (VFSA…FHGA), 159–182 (LYST…WHYH), 198–222 (MNHH…HIAL), 294–312 (MAHH…GHQY), 349–372 (WHAQ…HHMY), 388–414 (LSLF…IFMV), 436–458 (AIIS…LYIH), and 533–551 (FMVH…LILL). 2 residues coordinate [4Fe-4S] cluster: C575 and C584. The next 2 helical transmembrane spans lie at 591–612 (HVFL…HFSW) and 665–687 (LSAY…MFLF). A chlorophyll a'-binding site is contributed by H676. Chlorophyll a contacts are provided by M684 and Y692. A phylloquinone-binding site is contributed by W693. Residues 725–745 (AVGVAHYLLGGIATTWSFFLA) form a helical membrane-spanning segment.

It belongs to the PsaA/PsaB family. In terms of assembly, the PsaA/B heterodimer binds the P700 chlorophyll special pair and subsequent electron acceptors. PSI consists of a core antenna complex that captures photons, and an electron transfer chain that converts photonic excitation into a charge separation. The eukaryotic PSI reaction center is composed of at least 11 subunits. P700 is a chlorophyll a/chlorophyll a' dimer, A0 is one or more chlorophyll a, A1 is one or both phylloquinones and FX is a shared 4Fe-4S iron-sulfur center. is required as a cofactor.

The protein resides in the plastid. It is found in the chloroplast thylakoid membrane. The catalysed reaction is reduced [plastocyanin] + hnu + oxidized [2Fe-2S]-[ferredoxin] = oxidized [plastocyanin] + reduced [2Fe-2S]-[ferredoxin]. PsaA and PsaB bind P700, the primary electron donor of photosystem I (PSI), as well as the electron acceptors A0, A1 and FX. PSI is a plastocyanin/cytochrome c6-ferredoxin oxidoreductase, converting photonic excitation into a charge separation, which transfers an electron from the donor P700 chlorophyll pair to the spectroscopically characterized acceptors A0, A1, FX, FA and FB in turn. Oxidized P700 is reduced on the lumenal side of the thylakoid membrane by plastocyanin or cytochrome c6. In Ostreococcus tauri, this protein is Photosystem I P700 chlorophyll a apoprotein A1.